Reading from the N-terminus, the 153-residue chain is 3-hydroxyacyl-[acyl-carrier-protein] dehydratase FabZ (153 aa).

Histidine 54 is an active-site residue.

Belongs to the thioester dehydratase family. FabZ subfamily.

The protein resides in the cytoplasm. It carries out the reaction a (3R)-hydroxyacyl-[ACP] = a (2E)-enoyl-[ACP] + H2O. In terms of biological role, involved in unsaturated fatty acids biosynthesis. Catalyzes the dehydration of short chain beta-hydroxyacyl-ACPs and long chain saturated and unsaturated beta-hydroxyacyl-ACPs. The polypeptide is 3-hydroxyacyl-[acyl-carrier-protein] dehydratase FabZ (Shewanella sediminis (strain HAW-EB3)).